The chain runs to 389 residues: Probable acyl-CoA dehydrogenase fadE25 (389 aa).

Belongs to the acyl-CoA dehydrogenase family. FAD serves as cofactor.

The catalysed reaction is a 2,3-saturated acyl-CoA + A = a 2,3-dehydroacyl-CoA + AH2. In Mycobacterium bovis (strain ATCC BAA-935 / AF2122/97), this protein is Probable acyl-CoA dehydrogenase fadE25 (fadE25).